The sequence spans 94 residues: Ammonia regulation of amino acid uptake protein (94 aa).

2 repeats span residues His48–Gln57 and His58–Gln67.

Functionally, involved in ammonia regulation of the GAP1 permease. The protein is Ammonia regulation of amino acid uptake protein (AUA1) of Saccharomyces cerevisiae (strain ATCC 204508 / S288c) (Baker's yeast).